The sequence spans 402 residues: 1-deoxy-D-xylulose 5-phosphate reductoisomerase (402 aa).

NADPH is bound by residues T10, G11, S12, I13, N38, and N124. K125 is a binding site for 1-deoxy-D-xylulose 5-phosphate. E126 contributes to the NADPH binding site. Mn(2+) is bound at residue D150. S151, E152, S186, and H209 together coordinate 1-deoxy-D-xylulose 5-phosphate. E152 provides a ligand contact to Mn(2+). G215 contributes to the NADPH binding site. 4 residues coordinate 1-deoxy-D-xylulose 5-phosphate: S222, N227, K228, and E231. E231 is a binding site for Mn(2+).

The protein belongs to the DXR family. Mg(2+) is required as a cofactor. The cofactor is Mn(2+).

It catalyses the reaction 2-C-methyl-D-erythritol 4-phosphate + NADP(+) = 1-deoxy-D-xylulose 5-phosphate + NADPH + H(+). The protein operates within isoprenoid biosynthesis; isopentenyl diphosphate biosynthesis via DXP pathway; isopentenyl diphosphate from 1-deoxy-D-xylulose 5-phosphate: step 1/6. Catalyzes the NADPH-dependent rearrangement and reduction of 1-deoxy-D-xylulose-5-phosphate (DXP) to 2-C-methyl-D-erythritol 4-phosphate (MEP). This is 1-deoxy-D-xylulose 5-phosphate reductoisomerase from Vibrio vulnificus (strain CMCP6).